The sequence spans 352 residues: C-C chemokine receptor type 5 (352 aa).

The Extracellular portion of the chain corresponds to 1 to 30; that stretch reads MDYQTSTPLYDIDYGMSEPCQKLNVRQIAA. Y3 carries the sulfotyrosine modification. The O-linked (GalNAc...) serine glycan is linked to S6. Residues Y10 and Y14 each carry the sulfotyrosine modification. 2 disulfide bridges follow: C20/C269 and C101/C178. A helical transmembrane segment spans residues 31 to 58; it reads RLLPPLYSLVFIFGFVGNMLVVLILINC. Residues 59–68 are Cytoplasmic-facing; that stretch reads KKLKSMTDIY. Residues 69-89 traverse the membrane as a helical segment; it reads LLNLAISDLLFIITIPFWAHY. The Extracellular portion of the chain corresponds to 90 to 102; it reads AADQWVFGNTMCQ. Residues 103–124 traverse the membrane as a helical segment; that stretch reads LFTGFYFIGYFGGIFFIILLTI. The Cytoplasmic portion of the chain corresponds to 125 to 141; that stretch reads DRYLAIVHAVFALKART. Residues 142–166 traverse the membrane as a helical segment; it reads VTFGAATSVVTWVVAVFASLPGIIF. Topologically, residues 167–198 are extracellular; the sequence is TKSQKEGSRHTCSPHFPSSQYHFWKNFQTLKI. The helical transmembrane segment at 199 to 218 threads the bilayer; that stretch reads VILGLVLPLLVMIVCYSGII. Residues 219 to 235 are Cytoplasmic-facing; sequence KTLLRCRNEKKKHKAVR. A helical membrane pass occupies residues 236-260; sequence LIFVIMIVYFLFWAPYNIVLLLSTF. Over 261–277 the chain is Extracellular; that stretch reads QEFFGLNNCSGSNRLDQ. A helical membrane pass occupies residues 278 to 301; the sequence is AMQVTETLGMTHCCINPIIYAFVG. Residues 302–352 lie on the Cytoplasmic side of the membrane; it reads EKFRNYLLRFFRKYFASRFCKGCPVFQGEAPERVSSVYTRSTGEQEISVGL. S-palmitoyl cysteine attachment occurs at residues C321 and C324. 4 positions are modified to phosphoserine; by BARK1: S336, S337, S342, and S349.

This sequence belongs to the G-protein coupled receptor 1 family. Interacts with PRAF2. Efficient ligand binding to CCL3/MIP-1alpha and CCL4/MIP-1beta requires sulfation, O-glycosylation and sialic acid modifications. Glycosylation on Ser-6 is required for efficient binding of CCL4. Interacts with GRK2. Interacts with ARRB1 and ARRB2. Interacts with CNIH4. Interacts with S100A4; this interaction stimulates T-lymphocyte chemotaxis. Post-translationally, sulfated on at least 2 of the N-terminal tyrosines. Sulfation is required for efficient binding of the chemokines, CCL3 and CCL4. O-glycosylated, but not N-glycosylated. Ser-6 appears to be the major site. Also sialylated glycans present which contribute to chemokine binding. Ser-17 may also be glycosylated and, if so, with small moieties such as a T-antigen. In terms of processing, palmitoylation in the C-terminal is important for cell surface expression. Post-translationally, phosphorylation on serine residues in the C-terminal is stimulated by binding CC chemokines especially by APO-RANTES.

It localises to the cell membrane. Functionally, receptor for a number of inflammatory CC-chemokines including CCL3/MIP-1-alpha, CCL4/MIP-1-beta and RANTES and subsequently transduces a signal by increasing the intracellular calcium ion level. May play a role in the control of granulocytic lineage proliferation or differentiation. Participates in T-lymphocyte migration to the infection site by acting as a chemotactic receptor. The sequence is that of C-C chemokine receptor type 5 (CCR5) from Bos taurus (Bovine).